The following is a 156-amino-acid chain: Arginine repressor (156 aa).

This sequence belongs to the ArgR family.

The protein localises to the cytoplasm. Its pathway is amino-acid biosynthesis; L-arginine biosynthesis [regulation]. In terms of biological role, regulates arginine biosynthesis genes. The polypeptide is Arginine repressor (Erwinia tasmaniensis (strain DSM 17950 / CFBP 7177 / CIP 109463 / NCPPB 4357 / Et1/99)).